The chain runs to 357 residues: UDP-N-acetylglucosamine--N-acetylmuramyl-(pentapeptide) pyrophosphoryl-undecaprenol N-acetylglucosamine transferase (357 aa).

UDP-N-acetyl-alpha-D-glucosamine contacts are provided by residues 15 to 17 (TGG), N124, R165, S191, and Q285.

Belongs to the glycosyltransferase 28 family. MurG subfamily.

It is found in the cell inner membrane. It carries out the reaction di-trans,octa-cis-undecaprenyl diphospho-N-acetyl-alpha-D-muramoyl-L-alanyl-D-glutamyl-meso-2,6-diaminopimeloyl-D-alanyl-D-alanine + UDP-N-acetyl-alpha-D-glucosamine = di-trans,octa-cis-undecaprenyl diphospho-[N-acetyl-alpha-D-glucosaminyl-(1-&gt;4)]-N-acetyl-alpha-D-muramoyl-L-alanyl-D-glutamyl-meso-2,6-diaminopimeloyl-D-alanyl-D-alanine + UDP + H(+). Its pathway is cell wall biogenesis; peptidoglycan biosynthesis. Functionally, cell wall formation. Catalyzes the transfer of a GlcNAc subunit on undecaprenyl-pyrophosphoryl-MurNAc-pentapeptide (lipid intermediate I) to form undecaprenyl-pyrophosphoryl-MurNAc-(pentapeptide)GlcNAc (lipid intermediate II). The chain is UDP-N-acetylglucosamine--N-acetylmuramyl-(pentapeptide) pyrophosphoryl-undecaprenol N-acetylglucosamine transferase from Microcystis aeruginosa (strain NIES-843 / IAM M-2473).